We begin with the raw amino-acid sequence, 167 residues long: NAD(P)H-quinone oxidoreductase subunit I, chloroplastic (167 aa).

4Fe-4S ferredoxin-type domains lie at 55–84 (GRIH…VDWK) and 95–124 (LNYS…MTEE). Residues Cys64, Cys67, Cys70, Cys74, Cys104, Cys107, Cys110, and Cys114 each coordinate [4Fe-4S] cluster.

This sequence belongs to the complex I 23 kDa subunit family. As to quaternary structure, NDH is composed of at least 16 different subunits, 5 of which are encoded in the nucleus. The cofactor is [4Fe-4S] cluster.

The protein resides in the plastid. Its subcellular location is the chloroplast thylakoid membrane. The enzyme catalyses a plastoquinone + NADH + (n+1) H(+)(in) = a plastoquinol + NAD(+) + n H(+)(out). It catalyses the reaction a plastoquinone + NADPH + (n+1) H(+)(in) = a plastoquinol + NADP(+) + n H(+)(out). In terms of biological role, NDH shuttles electrons from NAD(P)H:plastoquinone, via FMN and iron-sulfur (Fe-S) centers, to quinones in the photosynthetic chain and possibly in a chloroplast respiratory chain. The immediate electron acceptor for the enzyme in this species is believed to be plastoquinone. Couples the redox reaction to proton translocation, and thus conserves the redox energy in a proton gradient. In Jasminum nudiflorum (Winter jasmine), this protein is NAD(P)H-quinone oxidoreductase subunit I, chloroplastic.